Reading from the N-terminus, the 291-residue chain is Protease HtpX homolog (291 aa).

Transmembrane regions (helical) follow at residues I4–L24 and S39–I59. Position 144 (H144) interacts with Zn(2+). The active site involves E145. H148 serves as a coordination point for Zn(2+). 2 helical membrane-spanning segments follow: residues L159 to V179 and V199 to F219. Residue E224 participates in Zn(2+) binding.

Belongs to the peptidase M48B family. Zn(2+) is required as a cofactor.

The protein localises to the cell inner membrane. The polypeptide is Protease HtpX homolog (Polaromonas naphthalenivorans (strain CJ2)).